Reading from the N-terminus, the 206-residue chain is Fibroblast growth factor 4 (206 aa).

The first 30 residues, 1-30 (MSGPGTAAVALLPAVLLALLAPWAGRGGAA), serve as a signal peptide directing secretion.

It belongs to the heparin-binding growth factors family. As to quaternary structure, interacts with FGFR1, FGFR2, FGFR3 and FGFR4. Affinity between fibroblast growth factors (FGFs) and their receptors is increased by heparan sulfate glycosaminoglycans that function as coreceptors.

It is found in the secreted. Its function is as follows. Plays an important role in the regulation of embryonic development, cell proliferation, and cell differentiation. Required for normal limb and cardiac valve development during embryogenesis. May play a role in embryonic molar tooth bud development via inducing the expression of MSX1, MSX2 and MSX1-mediated expression of SDC1 in dental mesenchyme cells. The sequence is that of Fibroblast growth factor 4 from Homo sapiens (Human).